The chain runs to 159 residues: 4-deoxy-4-sulfo-D-erythrose isomerase (159 aa).

The Proton acceptor role is filled by Cys66.

It belongs to the LacAB/RpiB family.

The enzyme catalyses 4-deoxy-4-sulfo-D-erythrose = 4-deoxy-4-sulfo-D-erythrulose. Its function is as follows. Part of the sulfo-TK pathway, a D-sulfoquinovose degradation pathway that produces 2-hydroxyethane-1-sulfonate (isethionate). Catalyzes the isomerization of 4-deoxy-4-sulfo-D-erythrose (SE) to 4-deoxy-4-sulfo-D-erythrulose (SEu). The sequence is that of 4-deoxy-4-sulfo-D-erythrose isomerase from Clostridium sp. (strain MSTE9).